A 152-amino-acid polypeptide reads, in one-letter code: Transcriptional regulator MraZ (152 aa).

2 consecutive SpoVT-AbrB domains span residues 5-52 (ATLV…PLPE) and 81-124 (ASEC…DETT).

It belongs to the MraZ family. In terms of assembly, forms oligomers.

The protein localises to the cytoplasm. The protein resides in the nucleoid. Functionally, negatively regulates its own expression and that of the subsequent genes in the proximal part of the division and cell wall (dcw) gene cluster. Acts by binding directly to DNA. May also regulate the expression of genes outside the dcw cluster. This Escherichia coli O45:K1 (strain S88 / ExPEC) protein is Transcriptional regulator MraZ.